We begin with the raw amino-acid sequence, 238 residues long: RAD9, HUS1, RAD1-interacting nuclear orphan protein 1 (238 aa).

Over residues 1–10 (MPPRKKRRQP) the composition is skewed to basic residues. The interval 1-31 (MPPRKKRRQPSQKAPLLFHQQPLEGPKHSCA) is disordered. Position 51 is a phosphoserine; by PLK1 (Ser-51). The RAD1-binding motif signature appears at 55–61 (SWVSPDF). The segment at 74–105 (KHQNRARHSSRKPTTSKFPHLTFESPQSSSSE) is disordered. Residues 75-84 (HQNRARHSSR) are compositionally biased toward basic residues. The short motif at 125 to 132 (RRPLVPVL) is the D-box element. Positions 174–178 (QKENS) match the KEN box motif.

In terms of assembly, interacts (when phosphorylated by PLK1) with POLQ; promoting POLQ recruitment to DNA damage sites. Interacts with RAD1; interaction is direct and promotes association with the 9-1-1 (RAD9-RAD1-HUS1) complex. Interacts with RAD18. Interacts with TOPBP1. Interacts with UBE2N. Phosphorylated at Ser-51 by PLK1, promoting interaction with polymerase theta (POLQ). In terms of processing, ubiquitinated and degraded by the APC/C complex upon mitotic exit. As to expression, weakly expressed in testis, prostate, ovary, thymus and small intestine. Expressed strongly in breast cancer cells.

It is found in the nucleus. It localises to the chromosome. Involved in microhomology-mediated end-joining (MMEJ) DNA repair by promoting recruitment of polymerase theta (POLQ) to DNA damage sites during mitosis. MMEJ is an alternative non-homologous end-joining (NHEJ) machinery that takes place during mitosis to repair double-strand breaks in DNA that originate in S-phase. Accumulates in M-phase; following phosphorylation by PLK1, interacts with POLQ, enabling its recruitment to double-strand breaks for subsequent repair. Also involved in the DNA damage response (DDR) signaling in response to genotoxic stresses such as ionizing radiation (IR) during the S phase. Recruited to sites of DNA damage through interaction with the 9-1-1 cell-cycle checkpoint response complex and TOPBP1 in a ATR-dependent manner. Required for the progression of the G1 to S phase transition. Plays a role in the stimulation of CHEK1 phosphorylation. The sequence is that of RAD9, HUS1, RAD1-interacting nuclear orphan protein 1 from Homo sapiens (Human).